A 728-amino-acid chain; its full sequence is Leucine-rich repeat and calponin homology domain-containing protein 1 (728 aa).

The span at 24–36 (HHPHHHHHHHQHH) shows a compositional bias: basic residues. The segment at 24 to 57 (HHPHHHHHHHQHHGGTGAPGGAGGGGGGSGGFNL) is disordered. Residues 37–54 (GGTGAPGGAGGGGGGSGG) show a composition bias toward gly residues. 9 LRR repeats span residues 98–119 (DTVQ…LCHF), 121–143 (SLEI…VNLQ), 144–166 (MLTY…CGLP), 167–187 (LKVL…IGQL), 189–210 (QLME…IGQL), 212–234 (SLRE…VDLS), 235–255 (LVKF…FREM), 257–278 (QLQV…ICTK), and 283–304 (IFKY…YLHT). The span at 311-322 (HQHVEDGKKDSD) shows a compositional bias: basic and acidic residues. Residues 311-348 (HQHVEDGKKDSDSGVGSDNGDKRLSATEPSDEDTVSLN) form a disordered region. S370 bears the Phosphoserine mark. Residues 377-398 (HQEFQPEPSLLGDSTNSGEERD) are disordered. S409 bears the Phosphoserine mark. Positions 516–525 (LQSNGSQYSP) are enriched in polar residues. The disordered stretch occupies residues 516 to 547 (LQSNGSQYSPNEIRENSPAVSPTTNSTAPFGL). S532 and S536 each carry phosphoserine. A compositionally biased stretch (polar residues) spans 533-543 (PAVSPTTNSTA). T568 carries the post-translational modification Phosphothreonine. Residues 576-692 (MREEKELVEQ…TLLALGEKAP (117 aa)) enclose the Calponin-homology (CH) domain.

As to quaternary structure, interacts (via LRR repeats) with unphosphorylated DOCK8 (via DHR-2 domain); the interaction prevents the interaction between DOCK8 and CDC42.

The protein resides in the cytoplasm. In terms of biological role, acts as a negative regulator of GTPase CDC42 by sequestering CDC42-guanine exchange factor DOCK8. Probably by preventing CDC42 activation, negatively regulates CD4(+) T-cell migration. The chain is Leucine-rich repeat and calponin homology domain-containing protein 1 (LRCH1) from Homo sapiens (Human).